We begin with the raw amino-acid sequence, 424 residues long: GTPase Obg (424 aa).

The 159-residue stretch at 1–159 (MVFIDTARIY…MWVRLELKLL (159 aa)) folds into the Obg domain. Residues 160 to 330 (ADVGLVGFPN…LLDKTIEILS (171 aa)) form the OBG-type G domain. GTP contacts are provided by residues 166 to 173 (GFPNAGKS), 191 to 195 (FTTLT), 212 to 215 (DIPG), 282 to 285 (NKMD), and 311 to 313 (SAL). Mg(2+) contacts are provided by serine 173 and threonine 193. The OCT domain maps to 347–424 (NPPEEEETLE…VRDFEFEYYE (78 aa)).

The protein belongs to the TRAFAC class OBG-HflX-like GTPase superfamily. OBG GTPase family. In terms of assembly, monomer. The cofactor is Mg(2+).

It is found in the cytoplasm. Its function is as follows. An essential GTPase which binds GTP, GDP and possibly (p)ppGpp with moderate affinity, with high nucleotide exchange rates and a fairly low GTP hydrolysis rate. Plays a role in control of the cell cycle, stress response, ribosome biogenesis and in those bacteria that undergo differentiation, in morphogenesis control. The sequence is that of GTPase Obg from Caldanaerobacter subterraneus subsp. tengcongensis (strain DSM 15242 / JCM 11007 / NBRC 100824 / MB4) (Thermoanaerobacter tengcongensis).